Here is a 326-residue protein sequence, read N- to C-terminus: Phenylalanine--tRNA ligase alpha subunit (326 aa).

Glutamate 251 is a Mg(2+) binding site.

It belongs to the class-II aminoacyl-tRNA synthetase family. Phe-tRNA synthetase alpha subunit type 1 subfamily. As to quaternary structure, tetramer of two alpha and two beta subunits. It depends on Mg(2+) as a cofactor.

Its subcellular location is the cytoplasm. The catalysed reaction is tRNA(Phe) + L-phenylalanine + ATP = L-phenylalanyl-tRNA(Phe) + AMP + diphosphate + H(+). The protein is Phenylalanine--tRNA ligase alpha subunit of Alteromonas mediterranea (strain DSM 17117 / CIP 110805 / LMG 28347 / Deep ecotype).